The chain runs to 375 residues: Fructose-1,6-bisphosphate aldolase/phosphatase (375 aa).

The active-site Proton acceptor; for FBP phosphatase activity is the Asp-15. Mg(2+) is bound by residues Asp-15, His-22, Asp-56, and Asp-57. His-22 provides a ligand contact to beta-D-fructose 1,6-bisphosphate. His-22 serves as a coordination point for dihydroxyacetone phosphate. Tyr-94 serves as a coordination point for beta-D-fructose 1,6-bisphosphate. Gln-98 provides a ligand contact to Mg(2+). A beta-D-fructose 1,6-bisphosphate-binding site is contributed by 107–108 (GN). Residue Asp-135 coordinates Mg(2+). Residue Lys-136 participates in beta-D-fructose 1,6-bisphosphate binding. Residue Lys-136 coordinates dihydroxyacetone phosphate. Tyr-237 serves as the catalytic Proton donor/acceptor; for FBP aldolase activity. Mg(2+)-binding residues include Lys-240, Asp-241, and Asp-242. Catalysis depends on Lys-240, which acts as the Schiff-base intermediate with DHAP; for FBP aldolase activity. Beta-D-fructose 1,6-bisphosphate contacts are provided by residues 250-251 (QS), Arg-274, Asp-295, and Tyr-357. Positions 274 and 295 each coordinate dihydroxyacetone phosphate.

This sequence belongs to the FBP aldolase/phosphatase family. As to quaternary structure, homooctamer; dimer of tetramers. It depends on Mg(2+) as a cofactor.

The enzyme catalyses beta-D-fructose 1,6-bisphosphate + H2O = beta-D-fructose 6-phosphate + phosphate. It catalyses the reaction beta-D-fructose 1,6-bisphosphate = D-glyceraldehyde 3-phosphate + dihydroxyacetone phosphate. The protein operates within carbohydrate biosynthesis; gluconeogenesis. Activity is enhanced by dithioerythritol, and is slightly inhibited by fructose 2,6-bisphosphate. AMP does not inhibit the enzyme activity. Catalyzes two subsequent steps in gluconeogenesis: the aldol condensation of dihydroxyacetone phosphate (DHAP) and glyceraldehyde-3-phosphate (GA3P) to fructose-1,6-bisphosphate (FBP), and the dephosphorylation of FBP to fructose-6-phosphate (F6P). Does not display hydrolase activity against fructose 2,6-bisphosphate, fructose 6-phosphate, fructose 1-phosphate, glucose 6-phosphate, and glucose 1-phosphate. Exhibits only negligible activity on inositol-1-phosphate (IMP). Is essential for the growth of T.kodakaraensis under gluconeogenic conditions. This chain is Fructose-1,6-bisphosphate aldolase/phosphatase, found in Thermococcus kodakarensis (strain ATCC BAA-918 / JCM 12380 / KOD1) (Pyrococcus kodakaraensis (strain KOD1)).